Consider the following 359-residue polypeptide: Olfactory receptor 5T2 (359 aa).

Topologically, residues 1–64 (MSYSIYKSTV…GFTDNLELQT (64 aa)) are extracellular. The N-linked (GlcNAc...) asparagine glycan is linked to N44. The helical transmembrane segment at 65-85 (IFFFLFLAIYLFTLMGNLGLI) threads the bilayer. At 86–93 (LVVIRDSQ) the chain is on the cytoplasmic side. Residues 94–114 (LHKPMYYFLSMLSSVDACYSS) form a helical membrane-spanning segment. The Extracellular portion of the chain corresponds to 115–138 (VITPNMLVDFTTKNKVISFLGCVA). The chain crosses the membrane as a helical span at residues 139–159 (QVFLACSFGTTECFLLAAMAY). The Cytoplasmic portion of the chain corresponds to 160 to 178 (DRYVAIYNPLLYSVSMSPR). The helical transmembrane segment at 179–199 (VYMPLINASYVAGILHATIHT) threads the bilayer. Residues 200–235 (VATFSLSFCGANEIRRVFCDIPPLLAISYSDTHTNQ) lie on the Extracellular side of the membrane. Residues 236–256 (LLLFYFVGSIELVTILIVLIS) form a helical membrane-spanning segment. Residues 257-276 (YGLILLAILKMYSAEGRRKV) are Cytoplasmic-facing. Residues 277-297 (FSTCGAHLTGVSIYYGTILFM) form a helical membrane-spanning segment. Residues 298–310 (YVRPSSSYASDHD) lie on the Extracellular side of the membrane. The helical transmembrane segment at 311 to 331 (MIVSIFYTIVIPLLNPVIYSL) threads the bilayer. At 332–359 (RNKDVKDSMKKMFGKNQVINKVYFHTKK) the chain is on the cytoplasmic side.

The protein belongs to the G-protein coupled receptor 1 family.

Its subcellular location is the cell membrane. Functionally, odorant receptor. This Homo sapiens (Human) protein is Olfactory receptor 5T2 (OR5T2).